We begin with the raw amino-acid sequence, 445 residues long: Glucose-6-phosphate isomerase (445 aa).

Catalysis depends on Glu284, which acts as the Proton donor. Residues His305 and Lys419 contribute to the active site.

It belongs to the GPI family.

Its subcellular location is the cytoplasm. It catalyses the reaction alpha-D-glucose 6-phosphate = beta-D-fructose 6-phosphate. The protein operates within carbohydrate biosynthesis; gluconeogenesis. Its pathway is carbohydrate degradation; glycolysis; D-glyceraldehyde 3-phosphate and glycerone phosphate from D-glucose: step 2/4. Functionally, catalyzes the reversible isomerization of glucose-6-phosphate to fructose-6-phosphate. This Leptospira interrogans serogroup Icterohaemorrhagiae serovar Lai (strain 56601) protein is Glucose-6-phosphate isomerase.